The primary structure comprises 558 residues: NXPE family member 2 (558 aa).

A helical membrane pass occupies residues 17–37; sequence ASARKLFLIVLIIFVFWVVFM.

Belongs to the NXPE family.

It is found in the membrane. The sequence is that of NXPE family member 2 (Nxpe2) from Mus musculus (Mouse).